The following is a 450-amino-acid chain: Phosphoglucosamine mutase (450 aa).

S102 functions as the Phosphoserine intermediate in the catalytic mechanism. Mg(2+) contacts are provided by S102, D242, D244, and D246. At S102 the chain carries Phosphoserine.

This sequence belongs to the phosphohexose mutase family. Mg(2+) is required as a cofactor. In terms of processing, activated by phosphorylation.

It catalyses the reaction alpha-D-glucosamine 1-phosphate = D-glucosamine 6-phosphate. In terms of biological role, catalyzes the conversion of glucosamine-6-phosphate to glucosamine-1-phosphate. This chain is Phosphoglucosamine mutase, found in Staphylococcus haemolyticus (strain JCSC1435).